A 186-amino-acid chain; its full sequence is UPF0301 protein Nmul_A2478 (186 aa).

It belongs to the UPF0301 (AlgH) family.

The chain is UPF0301 protein Nmul_A2478 from Nitrosospira multiformis (strain ATCC 25196 / NCIMB 11849 / C 71).